A 140-amino-acid chain; its full sequence is Nucleoside diphosphate kinase (140 aa).

ATP is bound by residues K11, F59, R87, T93, R104, and N114. The active-site Pros-phosphohistidine intermediate is the H117.

The protein belongs to the NDK family. Homotetramer. Requires Mg(2+) as cofactor.

The protein resides in the cytoplasm. It carries out the reaction a 2'-deoxyribonucleoside 5'-diphosphate + ATP = a 2'-deoxyribonucleoside 5'-triphosphate + ADP. It catalyses the reaction a ribonucleoside 5'-diphosphate + ATP = a ribonucleoside 5'-triphosphate + ADP. In terms of biological role, major role in the synthesis of nucleoside triphosphates other than ATP. The ATP gamma phosphate is transferred to the NDP beta phosphate via a ping-pong mechanism, using a phosphorylated active-site intermediate. This Methylocella silvestris (strain DSM 15510 / CIP 108128 / LMG 27833 / NCIMB 13906 / BL2) protein is Nucleoside diphosphate kinase.